Here is a 902-residue protein sequence, read N- to C-terminus: Nitrate reductase [NADPH] (902 aa).

C182 is a Mo-molybdopterin binding site. The Cytochrome b5 heme-binding domain occupies 537–612; sequence LPLIFADEVA…LKKYCIGRCS (76 aa). The heme site is built by H572 and H595. An FAD-binding FR-type domain is found at 637–751; it reads RTKVPIVLIS…KGPLGHFTYY (115 aa). Residues 689–692, 708–712, F713, 725–727, and T778 each bind FAD; these read RAYT, LIKVY, and LFS. Position 872–879 (872–879) interacts with NADP(+); the sequence is CMCGPEGM.

It belongs to the nitrate reductase family. Homodimer. It depends on FAD as a cofactor. Heme is required as a cofactor. Mo-molybdopterin serves as cofactor.

It carries out the reaction nitrite + NADP(+) + H2O = nitrate + NADPH + H(+). Its function is as follows. Nitrate reductase is a key enzyme involved in the first step of nitrate assimilation in plants, fungi and bacteria. This chain is Nitrate reductase [NADPH] (NIAA), found in Phytophthora infestans (Potato late blight agent).